Here is a 686-residue protein sequence, read N- to C-terminus: Delta-like protein 4 (686 aa).

Positions Met1–Ala26 are cleaved as a signal peptide. At Gly27–Ala532 the chain is on the extracellular side. Intrachain disulfides connect Cys51–Cys55 and Cys62–Cys75. N-linked (GlcNAc...) asparagine glycans are attached at residues Asn79, Asn109, and Asn162. In terms of domain architecture, DSL spans Val174–Cys218. Cys176 and Cys185 form a disulfide bridge. Interaction with Notch1 regions lie at residues Ser186 to Leu188 and Arg192 to Phe196. 26 disulfide bridges follow: Cys189–Cys201, Cys209–Cys218, Cys223–Cys234, Cys227–Cys240, Cys242–Cys251, Cys254–Cys265, Cys260–Cys271, Cys273–Cys282, Cys289–Cys301, Cys295–Cys311, Cys313–Cys322, Cys329–Cys340, Cys334–Cys349, Cys351–Cys360, Cys367–Cys378, Cys372–Cys389, Cys391–Cys400, Cys407–Cys418, Cys412–Cys427, Cys429–Cys438, Cys445–Cys456, Cys450–Cys465, Cys467–Cys476, Cys485–Cys496, Cys490–Cys507, and Cys509–Cys518. EGF-like domains follow at residues Asp219–Asn252, Glu253–Asp283, Asp285–Glu323, Gly325–Glu361, Thr364–Glu401, Lys403–Glu439, His441–Glu477, and Thr481–Glu519. Asn297 is a glycosylation site (N-linked (GlcNAc...) asparagine). N-linked (GlcNAc...) asparagine glycosylation is present at Asn394. Residues Val533–Val553 traverse the membrane as a helical segment. Residues Arg554–Val686 are Cytoplasmic-facing.

As to quaternary structure, interacts with NOTCH4. Interacts (via N-terminal DSL and MNNL domains) with NOTCH1 (via EGF-like domains). In terms of tissue distribution, expressed in vascular endothelium. Expressed in retina at least during embryogenesis.

It localises to the cell membrane. Involved in the Notch signaling pathway as Notch ligand. Activates NOTCH1 and NOTCH4. Involved in angiogenesis; negatively regulates endothelial cell proliferation and migration and angiogenic sprouting. Essential for retinal progenitor proliferation. Required for suppressing rod fates in late retinal progenitors as well as for proper generation of other retinal cell types. During spinal cord neurogenesis, inhibits V2a interneuron fate. The polypeptide is Delta-like protein 4 (Dll4) (Mus musculus (Mouse)).